The sequence spans 155 residues: Endoribonuclease YbeY (155 aa).

Residues His120, His124, and His130 each contribute to the Zn(2+) site.

The protein belongs to the endoribonuclease YbeY family. Requires Zn(2+) as cofactor.

The protein resides in the cytoplasm. In terms of biological role, single strand-specific metallo-endoribonuclease involved in late-stage 70S ribosome quality control and in maturation of the 3' terminus of the 16S rRNA. The polypeptide is Endoribonuclease YbeY (Borreliella burgdorferi (strain ATCC 35210 / DSM 4680 / CIP 102532 / B31) (Borrelia burgdorferi)).